Here is a 442-residue protein sequence, read N- to C-terminus: Zinc finger protein sfp1 (442 aa).

Residues 193–208 (AASSDMSSDEASSQAE) are compositionally biased toward low complexity. 2 disordered regions span residues 193–219 (AASS…MPES) and 304–333 (SPFV…HDSP). C2H2-type zinc fingers lie at residues 350 to 375 (YKCP…LHGH) and 399 to 422 (YRCE…THSH).

It localises to the cytoplasm. The protein resides in the nucleus. The sequence is that of Zinc finger protein sfp1 (sfp1) from Schizosaccharomyces pombe (strain 972 / ATCC 24843) (Fission yeast).